Consider the following 188-residue polypeptide: Ribosome-recycling factor (188 aa).

Belongs to the RRF family.

It is found in the cytoplasm. Functionally, responsible for the release of ribosomes from messenger RNA at the termination of protein biosynthesis. May increase the efficiency of translation by recycling ribosomes from one round of translation to another. This is Ribosome-recycling factor from Acidiphilium cryptum (strain JF-5).